A 422-amino-acid chain; its full sequence is 5-hydroxytryptamine receptor 1A (422 aa).

Over 1–38 the chain is Extracellular; the sequence is MDVLGPGQGNNTTSSEGPFGTRANATGISDVTFSYQVI. 3 N-linked (GlcNAc...) asparagine glycosylation sites follow: asparagine 10, asparagine 11, and asparagine 24. Residues 39–59 form a helical membrane-spanning segment; the sequence is TSLLLGTLIFCAVLGNACVVA. Residues 60–73 lie on the Cytoplasmic side of the membrane; the sequence is AIALERSLQNVANY. The chain crosses the membrane as a helical span at residues 74–98; the sequence is LIGSLAVTDLMVSVLVLPMAALYQV. The Extracellular segment spans residues 99-107; it reads LNKWTLGQV. A helical transmembrane segment spans residues 108-132; sequence TCDLFIALDVLCCTSSILHLCAIAL. Cysteine 109 and cysteine 187 are oxidised to a cystine. Positions 116 and 120 each coordinate serotonin. A DRY motif; important for ligand-induced conformation changes motif is present at residues 133–135; it reads DRY. Topologically, residues 133 to 152 are cytoplasmic; the sequence is DRYWAITDPIDYVNKRTPRR. A helical membrane pass occupies residues 153–174; sequence AAALISLTWLVGFLISIPPMLG. Residues 175–193 lie on the Extracellular side of the membrane; the sequence is WRTPEDRSDPDACTISKDH. Residues 194 to 216 traverse the membrane as a helical segment; the sequence is GYTIYSTFGAFYIPLLLMLVLYG. At 217 to 346 the chain is on the cytoplasmic side; the sequence is RIFRAARFRI…LARERKTVKT (130 aa). Residues 237-262 form a disordered region; it reads GADSRLGASPAPQRKKSANGELGSRE. 1D-myo-inositol 4-phosphate contacts are provided by lysine 345, threonine 346, and glycine 352. Residues 347–370 traverse the membrane as a helical segment; the sequence is LGIIMGTFILCWLPFFIVALVLPF. At 371–378 the chain is on the extracellular side; sequence CESSCHMP. The chain crosses the membrane as a helical span at residues 379–403; sequence TLLGAIINWLGYSNSLLNPVIYAYF. Positions 396-400 match the NPxxY motif; important for ligand-induced conformation changes and signaling motif; it reads NPVIY. 3 residues coordinate 1D-myo-inositol 4-phosphate: phenylalanine 403, asparagine 404, and lysine 405. Residues 404–422 are Cytoplasmic-facing; that stretch reads NKDFQNAFKKILKCKFCRR.

It belongs to the G-protein coupled receptor 1 family. 5-hydroxytryptamine receptor subfamily. HTR1A sub-subfamily. Heterodimer; heterodimerizes with GPER1. Interacts with YIF1B. Interacts with GPR39 and GALR1.

It is found in the cell membrane. Its subcellular location is the cell projection. The protein localises to the dendrite. G-protein coupled receptor activity is regulated by lipids: phosphatidylinositol 4-phosphate increases HTR1A-mediated activity. Its function is as follows. G-protein coupled receptor for 5-hydroxytryptamine (serotonin). Also functions as a receptor for various drugs and psychoactive substances. Ligand binding causes a conformation change that triggers signaling via guanine nucleotide-binding proteins (G proteins) and modulates the activity of downstream effectors, such as adenylate cyclase. HTR1A is coupled to G(i)/G(o) G alpha proteins and mediates inhibitory neurotransmission: signaling inhibits adenylate cyclase activity and activates a phosphatidylinositol-calcium second messenger system that regulates the release of Ca(2+) ions from intracellular stores. Beta-arrestin family members regulate signaling by mediating both receptor desensitization and resensitization processes. This Equus caballus (Horse) protein is 5-hydroxytryptamine receptor 1A (HTR1A).